Here is a 269-residue protein sequence, read N- to C-terminus: 4-hydroxy-tetrahydrodipicolinate reductase (269 aa).

NAD(+)-binding positions include 8–13 (GAGGRM) and Glu34. NADP(+) is bound at residue Arg35. Residues 98–100 (GTT) and 122–125 (ASNY) contribute to the NAD(+) site. The active-site Proton donor/acceptor is the His155. Residue His156 coordinates (S)-2,3,4,5-tetrahydrodipicolinate. The Proton donor role is filled by Lys159. Position 165 to 166 (165 to 166 (GT)) interacts with (S)-2,3,4,5-tetrahydrodipicolinate.

The protein belongs to the DapB family.

It localises to the cytoplasm. It carries out the reaction (S)-2,3,4,5-tetrahydrodipicolinate + NAD(+) + H2O = (2S,4S)-4-hydroxy-2,3,4,5-tetrahydrodipicolinate + NADH + H(+). The catalysed reaction is (S)-2,3,4,5-tetrahydrodipicolinate + NADP(+) + H2O = (2S,4S)-4-hydroxy-2,3,4,5-tetrahydrodipicolinate + NADPH + H(+). Its pathway is amino-acid biosynthesis; L-lysine biosynthesis via DAP pathway; (S)-tetrahydrodipicolinate from L-aspartate: step 4/4. Its function is as follows. Catalyzes the conversion of 4-hydroxy-tetrahydrodipicolinate (HTPA) to tetrahydrodipicolinate. The polypeptide is 4-hydroxy-tetrahydrodipicolinate reductase (Haemophilus ducreyi (strain 35000HP / ATCC 700724)).